The primary structure comprises 808 residues: Ribosome biogenesis protein BOP1 homolog (808 aa).

2 stretches are compositionally biased toward low complexity: residues 1–25 and 33–50; these read MTSPKGKPSPKRSAPAPATAALTPC and ATSSASASASSHISSSFD. A disordered region spans residues 1-55; it reads MTSPKGKPSPKRSAPAPATAALTPCAEERTEGATSSASASASSHISSSFDSPRDD. WD repeat units follow at residues 430–469, 640–680, 682–720, 724–766, and 777–808; these read GHTATVRSVSVSPNGQYLATGCDDHLVRVFEVQTGRLMKR, KFSE…RRFK, SGGVTTCLSIHPEGDNFLVGDTTSHTSWFDMDFSDKPYK, SHKG…DYNK, and KHQRPVYAVAWHPTLAWLFTSTEDGVVTAWTE.

It belongs to the WD repeat BOP1/ERB1 family.

The protein resides in the nucleus. The protein localises to the nucleolus. Its subcellular location is the nucleoplasm. Functionally, required for maturation of ribosomal RNAs and formation of the large ribosomal subunit. The chain is Ribosome biogenesis protein BOP1 homolog from Leishmania major.